A 105-amino-acid chain; its full sequence is MFAVIKTGGKQYRVAANDVLTIEKLEATAGDSIEFTEVLVIGEGADAAIGAPFVTGASVKAEVVEQNRGKKVIAFKKRRRQNSKRSRGHRQHHTVVRITDIVAAK.

Belongs to the bacterial ribosomal protein bL21 family. Part of the 50S ribosomal subunit. Contacts protein L20.

Functionally, this protein binds to 23S rRNA in the presence of protein L20. The polypeptide is Large ribosomal subunit protein bL21 (Rhizobium johnstonii (strain DSM 114642 / LMG 32736 / 3841) (Rhizobium leguminosarum bv. viciae)).